The sequence spans 373 residues: Putative glutamate--cysteine ligase 2-1 (373 aa).

It belongs to the glutamate--cysteine ligase type 2 family. YbdK subfamily.

It carries out the reaction L-cysteine + L-glutamate + ATP = gamma-L-glutamyl-L-cysteine + ADP + phosphate + H(+). Its function is as follows. ATP-dependent carboxylate-amine ligase which exhibits weak glutamate--cysteine ligase activity. This chain is Putative glutamate--cysteine ligase 2-1, found in Legionella pneumophila (strain Lens).